Here is a 513-residue protein sequence, read N- to C-terminus: ATP synthase subunit alpha (513 aa).

169 to 176 (GDRQTGKT) is an ATP binding site.

The protein belongs to the ATPase alpha/beta chains family. In terms of assembly, F-type ATPases have 2 components, CF(1) - the catalytic core - and CF(0) - the membrane proton channel. CF(1) has five subunits: alpha(3), beta(3), gamma(1), delta(1), epsilon(1). CF(0) has three main subunits: a(1), b(2) and c(9-12). The alpha and beta chains form an alternating ring which encloses part of the gamma chain. CF(1) is attached to CF(0) by a central stalk formed by the gamma and epsilon chains, while a peripheral stalk is formed by the delta and b chains.

The protein resides in the cell inner membrane. It catalyses the reaction ATP + H2O + 4 H(+)(in) = ADP + phosphate + 5 H(+)(out). Functionally, produces ATP from ADP in the presence of a proton gradient across the membrane. The alpha chain is a regulatory subunit. This is ATP synthase subunit alpha from Pseudoalteromonas translucida (strain TAC 125).